Here is a 299-residue protein sequence, read N- to C-terminus: Streptogrisin-B (299 aa).

Residues 1–38 (MRIKRTSNRSNAARRVRTTAVLAGLAAVAALAVPTANA) form the signal peptide. Residues 39–114 (ETPRTFSANQ…ERTPGKFTKL (76 aa)) constitute a propeptide that is removed on maturation. A disulfide bond links C128 and C148. Catalysis depends on charge relay system residues H147, D177, and S255. A disulfide bridge connects residues C249 and C276.

It belongs to the peptidase S1 family. Monomer.

The enzyme catalyses Hydrolysis of proteins with trypsin-like specificity.. In terms of biological role, has a primary specificity for large aliphatic or aromatic amino acids. This chain is Streptogrisin-B (sprB), found in Streptomyces griseus.